Reading from the N-terminus, the 73-residue chain is Beta-defensin 50 (73 aa).

The N-terminal stretch at 1 to 23 (MKTLHLLLLISGLLSVFVKGVGS) is a signal peptide. 2 disulfides stabilise this stretch: C34/C63 and C46/C64.

It belongs to the beta-defensin family.

It is found in the secreted. Has bactericidal activity. The chain is Beta-defensin 50 (Defb50) from Rattus norvegicus (Rat).